The following is a 66-amino-acid chain: Large ribosomal subunit protein uL29 (66 aa).

Belongs to the universal ribosomal protein uL29 family.

In Thermococcus sibiricus (strain DSM 12597 / MM 739), this protein is Large ribosomal subunit protein uL29.